The primary structure comprises 37 residues: Potassium channel toxin alpha-KTx 1.3 (37 aa).

At Q1 the chain carries Pyrrolidone carboxylic acid. Cystine bridges form between C7-C28, C13-C33, and C17-C35. Positions 26-33 are interaction with Ca(2+)-activated K(+) channels; that stretch reads GKCMGKKC.

It belongs to the short scorpion toxin superfamily. Potassium channel inhibitor family. Alpha-KTx 01 subfamily. As to expression, expressed by the venom gland.

The protein resides in the secreted. In terms of biological role, blocks selectively the high conductance calcium-activated (maxi-K) potassium channels (KCa1.1/KCNMA1). The protein is Potassium channel toxin alpha-KTx 1.3 of Hottentotta tamulus (Eastern Indian scorpion).